Consider the following 438-residue polypeptide: Glutamyl-tRNA(Gln) amidotransferase subunit D (438 aa).

One can recognise an Asparaginase/glutaminase domain in the interval 91-421; that stretch reads KNLSILSTGG…SEIYEIMKTN (331 aa). Residues Thr-101, Thr-177, Asp-178, and Lys-254 contribute to the active site.

This sequence belongs to the asparaginase 1 family. GatD subfamily. In terms of assembly, heterodimer of GatD and GatE.

It catalyses the reaction L-glutamyl-tRNA(Gln) + L-glutamine + ATP + H2O = L-glutaminyl-tRNA(Gln) + L-glutamate + ADP + phosphate + H(+). In terms of biological role, allows the formation of correctly charged Gln-tRNA(Gln) through the transamidation of misacylated Glu-tRNA(Gln) in organisms which lack glutaminyl-tRNA synthetase. The reaction takes place in the presence of glutamine and ATP through an activated gamma-phospho-Glu-tRNA(Gln). The GatDE system is specific for glutamate and does not act on aspartate. This chain is Glutamyl-tRNA(Gln) amidotransferase subunit D, found in Methanosphaera stadtmanae (strain ATCC 43021 / DSM 3091 / JCM 11832 / MCB-3).